Consider the following 61-residue polypeptide: Metallothionein-1 (61 aa).

Met-1 carries the N-acetylmethionine modification. The beta stretch occupies residues 1–29 (MDPNCSCSTGGSCTCSSSCGCKNCKCTSC). Residues Cys-5, Cys-7, Cys-13, Cys-15, Cys-19, Cys-21, Cys-24, Cys-26, Cys-29, Cys-33, Cys-34, Cys-36, Cys-37, Cys-41, Cys-44, Cys-48, Cys-50, Cys-57, Cys-59, and Cys-60 each contribute to the a divalent metal cation site. Residues 30–61 (KKSCCSCCPVGCSKCAQGCVCKGASDKCTCCA) form an alpha region.

Belongs to the metallothionein superfamily. Type 1 family.

Its function is as follows. Metallothioneins have a high content of cysteine residues that bind various heavy metals; these proteins are transcriptionally regulated by both heavy metals and glucocorticoids. In Rattus norvegicus (Rat), this protein is Metallothionein-1 (Mt1).